Consider the following 348-residue polypeptide: Phosphoribosylformylglycinamidine cyclo-ligase (348 aa).

Belongs to the AIR synthase family.

It is found in the cytoplasm. The catalysed reaction is 2-formamido-N(1)-(5-O-phospho-beta-D-ribosyl)acetamidine + ATP = 5-amino-1-(5-phospho-beta-D-ribosyl)imidazole + ADP + phosphate + H(+). The protein operates within purine metabolism; IMP biosynthesis via de novo pathway; 5-amino-1-(5-phospho-D-ribosyl)imidazole from N(2)-formyl-N(1)-(5-phospho-D-ribosyl)glycinamide: step 2/2. The sequence is that of Phosphoribosylformylglycinamidine cyclo-ligase from Ruegeria sp. (strain TM1040) (Silicibacter sp.).